Reading from the N-terminus, the 456-residue chain is Adenylosuccinate synthetase isozyme 1 (456 aa).

A disordered region spans residues 1–30 (MSSGWSQNDHRSYSNPPPVSGKRPRNDSGN). GTP-binding positions include 41 to 47 (GDEGKGK) and 69 to 71 (GHT). The active-site Proton acceptor is the aspartate 42. Aspartate 42 and glycine 69 together coordinate Mg(2+). Aspartate 42 is a substrate binding site. IMP contacts are provided by residues 42 to 45 (DEGK) and 67 to 70 (NAGH). Catalysis depends on histidine 70, which acts as the Proton donor. Phosphoserine is present on serine 130. IMP is bound by residues threonine 162, arginine 176, asparagine 255, threonine 270, and arginine 334. Position 330-336 (330-336 (VTTGRKR)) interacts with substrate. GTP contacts are provided by residues arginine 336, 362–364 (KLD), and 444–447 (GVGK).

It belongs to the adenylosuccinate synthetase family. In terms of assembly, homodimer. It depends on Mg(2+) as a cofactor.

The protein resides in the cytoplasm. It carries out the reaction IMP + L-aspartate + GTP = N(6)-(1,2-dicarboxyethyl)-AMP + GDP + phosphate + 2 H(+). It participates in purine metabolism; AMP biosynthesis via de novo pathway; AMP from IMP: step 1/2. Functionally, component of the purine nucleotide cycle (PNC), which interconverts IMP and AMP to regulate the nucleotide levels in various tissues, and which contributes to glycolysis and ammoniagenesis. Catalyzes the first committed step in the biosynthesis of AMP from IMP. The polypeptide is Adenylosuccinate synthetase isozyme 1 (adss1) (Danio rerio (Zebrafish)).